Consider the following 601-residue polypeptide: Arginine--tRNA ligase (601 aa).

The short motif at 135–145 (ANPTGPLHLGH) is the 'HIGH' region element.

This sequence belongs to the class-I aminoacyl-tRNA synthetase family. As to quaternary structure, monomer.

It localises to the cytoplasm. The enzyme catalyses tRNA(Arg) + L-arginine + ATP = L-arginyl-tRNA(Arg) + AMP + diphosphate. This chain is Arginine--tRNA ligase, found in Gloeobacter violaceus (strain ATCC 29082 / PCC 7421).